Consider the following 133-residue polypeptide: Small ribosomal subunit protein uS11 (133 aa).

Belongs to the universal ribosomal protein uS11 family. In terms of assembly, part of the 30S ribosomal subunit. Interacts with proteins S7 and S18. Binds to IF-3.

Its function is as follows. Located on the platform of the 30S subunit, it bridges several disparate RNA helices of the 16S rRNA. Forms part of the Shine-Dalgarno cleft in the 70S ribosome. The chain is Small ribosomal subunit protein uS11 from Burkholderia pseudomallei (strain 1106a).